The sequence spans 191 residues: Small ribosomal subunit protein uS5 (191 aa).

A disordered region spans residues 1-21; that stretch reads MAAERERGGRERSREREERDS. In terms of domain architecture, S5 DRBM spans 23–86; sequence FVDKLVHINR…ESAKRNLTRV (64 aa).

Part of the 30S ribosomal subunit. Contacts proteins S4 and S8.

In terms of biological role, with S4 and S12 plays an important role in translational accuracy. Its function is as follows. Located at the back of the 30S subunit body where it stabilizes the conformation of the head with respect to the body. This chain is Small ribosomal subunit protein uS5, found in Rhodopseudomonas palustris (strain ATCC BAA-98 / CGA009).